Reading from the N-terminus, the 264-residue chain is Elongation factor Ts (264 aa).

An involved in Mg(2+) ion dislocation from EF-Tu region spans residues 76–79; that stretch reads TDFV.

Belongs to the EF-Ts family.

Its subcellular location is the cytoplasm. In terms of biological role, associates with the EF-Tu.GDP complex and induces the exchange of GDP to GTP. It remains bound to the aminoacyl-tRNA.EF-Tu.GTP complex up to the GTP hydrolysis stage on the ribosome. This Deinococcus deserti (strain DSM 17065 / CIP 109153 / LMG 22923 / VCD115) protein is Elongation factor Ts.